We begin with the raw amino-acid sequence, 184 residues long: ATP synthase subunit b, chloroplastic (184 aa).

The chain crosses the membrane as a helical span at residues 26 to 48 (ILATNLINLSVVLGVLIFFGKGV).

It belongs to the ATPase B chain family. F-type ATPases have 2 components, F(1) - the catalytic core - and F(0) - the membrane proton channel. F(1) has five subunits: alpha(3), beta(3), gamma(1), delta(1), epsilon(1). F(0) has four main subunits: a(1), b(1), b'(1) and c(10-14). The alpha and beta chains form an alternating ring which encloses part of the gamma chain. F(1) is attached to F(0) by a central stalk formed by the gamma and epsilon chains, while a peripheral stalk is formed by the delta, b and b' chains.

It localises to the plastid. The protein resides in the chloroplast thylakoid membrane. F(1)F(0) ATP synthase produces ATP from ADP in the presence of a proton or sodium gradient. F-type ATPases consist of two structural domains, F(1) containing the extramembraneous catalytic core and F(0) containing the membrane proton channel, linked together by a central stalk and a peripheral stalk. During catalysis, ATP synthesis in the catalytic domain of F(1) is coupled via a rotary mechanism of the central stalk subunits to proton translocation. Functionally, component of the F(0) channel, it forms part of the peripheral stalk, linking F(1) to F(0). The polypeptide is ATP synthase subunit b, chloroplastic (Acorus calamus (Sweet flag)).